The sequence spans 248 residues: 2,3-bisphosphoglycerate-dependent phosphoglycerate mutase (248 aa).

Substrate contacts are provided by residues 8-15 (RHGESQWN), 21-22 (TG), Arg60, 87-90 (ERHY), Lys98, 114-115 (RR), and 183-184 (GN). The active-site Tele-phosphohistidine intermediate is His9. Glu87 acts as the Proton donor/acceptor in catalysis.

It belongs to the phosphoglycerate mutase family. BPG-dependent PGAM subfamily. In terms of assembly, homodimer.

It catalyses the reaction (2R)-2-phosphoglycerate = (2R)-3-phosphoglycerate. It participates in carbohydrate degradation; glycolysis; pyruvate from D-glyceraldehyde 3-phosphate: step 3/5. Its function is as follows. Catalyzes the interconversion of 2-phosphoglycerate and 3-phosphoglycerate. This chain is 2,3-bisphosphoglycerate-dependent phosphoglycerate mutase, found in Alteromonas mediterranea (strain DSM 17117 / CIP 110805 / LMG 28347 / Deep ecotype).